The following is a 262-amino-acid chain: MEKCDICHQKFSNKTNLNRHKVMHSGKKKFECQFCRRPFFRNDRMKEHMMTHIKKGNTFECPITACNSKFNSFTSLQFHVDSEHIIRGSSPAKCKSCIKWFNSSHRLLLHFHTAHLDHTKFFSFKPAPILPKSTTSILNPIKNPDDFDRIFDFFKTEIAPLFPLHSTVSQAPLPQCSRSVKSAKELSPTPSTEIETPEEEELDGPESWYCDYCKIRFDDKVMWYLHSGLHSDDIPFKCSLCGSLCDGKYDFAAHLVYANHNF.

4 consecutive C2H2-type zinc fingers follow at residues 2–24, 30–52, 59–84, and 92–115; these read EKCD…KVMH, FECQ…MMTH, FECP…DSEH, and AKCK…HTAH. The interval 179–204 is disordered; it reads SVKSAKELSPTPSTEIETPEEEELDG. Residues 185 to 194 are compositionally biased toward low complexity; that stretch reads ELSPTPSTEI. Over residues 195-204 the composition is skewed to acidic residues; the sequence is ETPEEEELDG. C2H2-type zinc fingers lie at residues 208–230 and 236–260; these read WYCD…SGLH and FKCS…YANH.

The protein belongs to the krueppel C2H2-type zinc-finger protein family.

It is found in the nucleus. Its function is as follows. Together with the zinc finger protein ztf-16, plays a role in gonadogenesis, specifically in somatic gonad precursor cell development. This is possibly by regulating tra-1 gene expression. In terms of biological role, required for proper gonadal primordium assembly and somatic gonad precursor cell morphology. This Caenorhabditis elegans protein is Zinc finger protein ehn-3.